Consider the following 111-residue polypeptide: N-alpha-acetyltransferase 38-B, NatC auxiliary subunit (111 aa).

Residues 28–106 (TARHKLESLL…IVSIQVELET (79 aa)) enclose the Sm domain.

Belongs to the snRNP Sm proteins family. As to quaternary structure, component of the N-terminal acetyltransferase C (NatC) complex, which is composed of naa35, naa38 and naa30.

It localises to the cytoplasm. Auxillary component of the N-terminal acetyltransferase C (NatC) complex which catalyzes acetylation of N-terminal methionine residues. This chain is N-alpha-acetyltransferase 38-B, NatC auxiliary subunit (naa38-b), found in Xenopus laevis (African clawed frog).